Reading from the N-terminus, the 71-residue chain is uncharacterized protein (71 aa).

A signal peptide spans 1–26; that stretch reads MIKFSVILGMIRCSLTHITTKNTVNA.

This is an uncharacterized protein from Bacillus subtilis (strain 168).